The following is a 758-amino-acid chain: Catalase-peroxidase (758 aa).

Positions 1 to 10 are enriched in polar residues; it reads MSDTQDNAPA. A disordered region spans residues 1-59; sequence MSDTQDNAPASAQGVDQKAAAGCPVAHDSVTAHGSESESPAIDSPTPHSGGRPRTNRDW. The tryptophyl-tyrosyl-methioninium (Trp-Tyr) (with M-276) cross-link spans 128–250; sequence WHAAGTYRID…VGATEMGLIY (123 aa). Residue His-129 is the Proton acceptor of the active site. The tryptophyl-tyrosyl-methioninium (Tyr-Met) (with W-128) cross-link spans 250–276; the sequence is YVNPEGPRGNADPAAAAHFIRETFRRM. His-291 is a heme b binding site.

It belongs to the peroxidase family. Peroxidase/catalase subfamily. Homodimer or homotetramer. Heme b serves as cofactor. In terms of processing, formation of the three residue Trp-Tyr-Met cross-link is important for the catalase, but not the peroxidase activity of the enzyme.

The enzyme catalyses H2O2 + AH2 = A + 2 H2O. It carries out the reaction 2 H2O2 = O2 + 2 H2O. Functionally, bifunctional enzyme with both catalase and broad-spectrum peroxidase activity. This chain is Catalase-peroxidase, found in Salinispora arenicola (strain CNS-205).